Here is a 241-residue protein sequence, read N- to C-terminus: Eukaryotic translation initiation factor 3 subunit J (241 aa).

The span at 1–27 shows a compositional bias: basic and acidic residues; it reads MEEDWEQHGEKEEVPLPAKKPDANKWD. The segment at 1–99 is disordered; sequence MEEDWEQHGE…ENMTPEQKLA (99 aa). Residues 28–45 show a composition bias toward acidic residues; sequence GEDEEEEVKDSWEDEDEL. Residues 31–119 adopt a coiled-coil conformation; sequence EEEEVKDSWE…ESDLKNALDT (89 aa). Composition is skewed to basic and acidic residues over residues 46–58 and 69–90; these read EEKK…ETPK and IVEK…KEAE.

Belongs to the eIF-3 subunit J family. In terms of assembly, component of the eukaryotic translation initiation factor 3 (eIF-3) complex.

The protein localises to the cytoplasm. In terms of biological role, component of the eukaryotic translation initiation factor 3 (eIF-3) complex, which is involved in protein synthesis of a specialized repertoire of mRNAs and, together with other initiation factors, stimulates binding of mRNA and methionyl-tRNAi to the 40S ribosome. The eIF-3 complex specifically targets and initiates translation of a subset of mRNAs involved in cell proliferation. This is Eukaryotic translation initiation factor 3 subunit J from Culex quinquefasciatus (Southern house mosquito).